A 364-amino-acid polypeptide reads, in one-letter code: NAC transcription factor 56 (364 aa).

The disordered stretch occupies residues 1–23; that stretch reads MESTDSSGGPPPPQPNLPPGFRF. The segment covering 9–18 has biased composition (pro residues); the sequence is GPPPPQPNLP. The NAC domain occupies 17–178; the sequence is LPPGFRFHPT…DWVLCRIYKK (162 aa). The DNA-binding element occupies 116–184; that stretch reads VGVKKALVFY…IYKKNNASRH (69 aa).

Stamen specific, in anthers from stage 8. Expressed in the outer integument, but seems not expressed in the embryo at the torpedo stage.

Its subcellular location is the nucleus. In terms of biological role, transcription factor of the NAC family. Together with NAC018/NARS2, regulates embryogenesis by regulating the development and degeneration of ovule integuments, a process required for intertissue communication between the embryo and the maternal integument. In Arabidopsis thaliana (Mouse-ear cress), this protein is NAC transcription factor 56.